The primary structure comprises 132 residues: Large ribosomal subunit protein bL17 (132 aa).

The protein belongs to the bacterial ribosomal protein bL17 family. Part of the 50S ribosomal subunit. Contacts protein L32.

The chain is Large ribosomal subunit protein bL17 from Albidiferax ferrireducens (strain ATCC BAA-621 / DSM 15236 / T118) (Rhodoferax ferrireducens).